We begin with the raw amino-acid sequence, 187 residues long: Accessory gene regulator protein B (187 aa).

5 helical membrane-spanning segments follow: residues 49–69 (LAYILNIFIFTLITNISFYLI), 82–102 (FWCYIESITLFIVLPLLVLHF), 107–127 (TLMMFLALLSVGVVIKYAPAA), 143–163 (YFSIIISTILFIITLFVKEPY), and 164–184 (TQFIQLGIIIQAITLLPIYYS).

The protein belongs to the AgrB family.

It localises to the cell membrane. Its function is as follows. Essential for the production of a quorum sensing system signal molecule, the autoinducing peptide (AIP). This quorum sensing system is responsible for the regulation of the expression of virulence factor genes. Involved in the proteolytic processing of AgrD, the precursor of AIP. In Staphylococcus aureus (strain MRSA252), this protein is Accessory gene regulator protein B.